An 82-amino-acid chain; its full sequence is Large ribosomal subunit protein bL31B (82 aa).

The protein belongs to the bacterial ribosomal protein bL31 family. Type B subfamily. In terms of assembly, part of the 50S ribosomal subunit.

This Pectobacterium atrosepticum (strain SCRI 1043 / ATCC BAA-672) (Erwinia carotovora subsp. atroseptica) protein is Large ribosomal subunit protein bL31B.